The chain runs to 502 residues: Maturase K (502 aa).

It belongs to the intron maturase 2 family. MatK subfamily.

Its subcellular location is the plastid. It localises to the chloroplast. Its function is as follows. Usually encoded in the trnK tRNA gene intron. Probably assists in splicing its own and other chloroplast group II introns. Binds its homologous trnK precursor transcript. This is Maturase K from Sinapis alba (White mustard).